The sequence spans 391 residues: Chorismate synthase (391 aa).

Residue R48 coordinates NADP(+). FMN contacts are provided by residues 126 to 128, G286, 301 to 305, and R328; these read RAS and KPTSS.

Belongs to the chorismate synthase family. FMNH2 is required as a cofactor.

It carries out the reaction 5-O-(1-carboxyvinyl)-3-phosphoshikimate = chorismate + phosphate. It participates in metabolic intermediate biosynthesis; chorismate biosynthesis; chorismate from D-erythrose 4-phosphate and phosphoenolpyruvate: step 7/7. Catalyzes the anti-1,4-elimination of the C-3 phosphate and the C-6 proR hydrogen from 5-enolpyruvylshikimate-3-phosphate (EPSP) to yield chorismate, which is the branch point compound that serves as the starting substrate for the three terminal pathways of aromatic amino acid biosynthesis. This reaction introduces a second double bond into the aromatic ring system. The polypeptide is Chorismate synthase (Saccharolobus islandicus (strain Y.N.15.51 / Yellowstone #2) (Sulfolobus islandicus)).